The following is a 318-amino-acid chain: Acetaldehyde dehydrogenase 1 (318 aa).

Position 15-18 (15-18 (SGNI)) interacts with NAD(+). The active-site Acyl-thioester intermediate is the Cys-133. Residues 164–172 (SAGPGTRAN) and Asn-289 each bind NAD(+).

This sequence belongs to the acetaldehyde dehydrogenase family.

It carries out the reaction acetaldehyde + NAD(+) + CoA = acetyl-CoA + NADH + H(+). In Azotobacter vinelandii (strain DJ / ATCC BAA-1303), this protein is Acetaldehyde dehydrogenase 1 (xylQ).